We begin with the raw amino-acid sequence, 274 residues long: Coat protein (274 aa).

Residues 88 to 112 are disordered; the sequence is RPAKQVLKGSSSKSQQRDEGEVVFT. Positions 102 to 112 are enriched in basic and acidic residues; it reads QQRDEGEVVFT.

It localises to the virion. The polypeptide is Coat protein (Rubus idaeus (Raspberry)).